A 208-amino-acid polypeptide reads, in one-letter code: Mediator of RNA polymerase II transcription subunit 18 (208 aa).

The protein belongs to the Mediator complex subunit 18 family. As to quaternary structure, component of the Mediator complex.

The protein resides in the nucleus. Functionally, component of the Mediator complex, a coactivator involved in the regulated transcription of nearly all RNA polymerase II-dependent genes. Mediator functions as a bridge to convey information from gene-specific regulatory proteins to the basal RNA polymerase II transcription machinery. Mediator is recruited to promoters by direct interactions with regulatory proteins and serves as a scaffold for the assembly of a functional preinitiation complex with RNA polymerase II and the general transcription factors. In Xenopus tropicalis (Western clawed frog), this protein is Mediator of RNA polymerase II transcription subunit 18 (med18).